A 124-amino-acid chain; its full sequence is Large ribosomal subunit protein bL12 (124 aa).

This sequence belongs to the bacterial ribosomal protein bL12 family. In terms of assembly, homodimer. Part of the ribosomal stalk of the 50S ribosomal subunit. Forms a multimeric L10(L12)X complex, where L10 forms an elongated spine to which 2 to 4 L12 dimers bind in a sequential fashion. Binds GTP-bound translation factors.

Its function is as follows. Forms part of the ribosomal stalk which helps the ribosome interact with GTP-bound translation factors. Is thus essential for accurate translation. This chain is Large ribosomal subunit protein bL12, found in Desulforamulus reducens (strain ATCC BAA-1160 / DSM 100696 / MI-1) (Desulfotomaculum reducens).